Here is a 59-residue protein sequence, read N- to C-terminus: Light-harvesting protein B-800-850 alpha chain A (59 aa).

At 1–11 the chain is on the cytoplasmic side; the sequence is MNQARIWTVVK. The chain crosses the membrane as a helical span at residues 12–35; that stretch reads PTVGLPLLLGSVTVIAILVHFAVL. Residue histidine 31 coordinates a bacteriochlorophyll. Residues 36-59 are Periplasmic-facing; sequence SHTTWFSKYWNGKAAAIESSVNVG.

This sequence belongs to the antenna complex alpha subunit family. In terms of assembly, the core complex is formed by different alpha and beta chains, binding bacteriochlorophyll molecules, and arranged most probably in tetrameric structures disposed around the reaction center. The non-pigmented gamma chains may constitute additional components.

It is found in the cell inner membrane. Antenna complexes are light-harvesting systems, which transfer the excitation energy to the reaction centers. This chain is Light-harvesting protein B-800-850 alpha chain A (pucAA), found in Rhodopseudomonas palustris (strain ATCC BAA-98 / CGA009).